Consider the following 212-residue polypeptide: Pyridoxine/pyridoxamine 5'-phosphate oxidase (212 aa).

Residues 8–11 (RTDY) and Lys-66 each bind substrate. FMN is bound by residues 61–66 (RIVLLK), 76–77 (FT), Lys-83, and Gln-105. Tyr-123, Arg-127, and Ser-131 together coordinate substrate. Residues 140–141 (QS) and Trp-184 contribute to the FMN site. 190 to 192 (RLH) lines the substrate pocket. Residue Arg-194 participates in FMN binding.

The protein belongs to the pyridoxamine 5'-phosphate oxidase family. In terms of assembly, homodimer. FMN is required as a cofactor.

The catalysed reaction is pyridoxamine 5'-phosphate + O2 + H2O = pyridoxal 5'-phosphate + H2O2 + NH4(+). The enzyme catalyses pyridoxine 5'-phosphate + O2 = pyridoxal 5'-phosphate + H2O2. The protein operates within cofactor metabolism; pyridoxal 5'-phosphate salvage; pyridoxal 5'-phosphate from pyridoxamine 5'-phosphate: step 1/1. Its pathway is cofactor metabolism; pyridoxal 5'-phosphate salvage; pyridoxal 5'-phosphate from pyridoxine 5'-phosphate: step 1/1. Its function is as follows. Catalyzes the oxidation of either pyridoxine 5'-phosphate (PNP) or pyridoxamine 5'-phosphate (PMP) into pyridoxal 5'-phosphate (PLP). The protein is Pyridoxine/pyridoxamine 5'-phosphate oxidase of Ralstonia pickettii (strain 12J).